Here is a 129-residue protein sequence, read N- to C-terminus: AECSVDIAGNDGMQFDKKEITVSKSCKQFTVNLKHPGKLAKNVMGHNWVLTKQADMQGAVNDGMAAGLDNNYVKKDDARVIAHTKVIGGGETDSVTFDVSKLAAGEDYAYFCSFPGHFALMKGVLKLVD.

The Plastocyanin-like domain maps to 1–129; the sequence is AECSVDIAGN…LMKGVLKLVD (129 aa). A disulfide bridge connects residues cysteine 3 and cysteine 26. Cu cation contacts are provided by histidine 46, cysteine 112, histidine 117, and methionine 121.

The protein localises to the periplasm. Functionally, transfers electrons from cytochrome c551 to cytochrome oxidase. The sequence is that of Azurin-1 from Alcaligenes xylosoxydans xylosoxydans (Achromobacter xylosoxidans).